Consider the following 292-residue polypeptide: 4-hydroxy-tetrahydrodipicolinate synthase (292 aa).

Threonine 45 serves as a coordination point for pyruvate. Tyrosine 133 acts as the Proton donor/acceptor in catalysis. Residue lysine 162 is the Schiff-base intermediate with substrate of the active site. A pyruvate-binding site is contributed by isoleucine 204.

It belongs to the DapA family. As to quaternary structure, homotetramer; dimer of dimers.

The protein resides in the cytoplasm. It carries out the reaction L-aspartate 4-semialdehyde + pyruvate = (2S,4S)-4-hydroxy-2,3,4,5-tetrahydrodipicolinate + H2O + H(+). It participates in amino-acid biosynthesis; L-lysine biosynthesis via DAP pathway; (S)-tetrahydrodipicolinate from L-aspartate: step 3/4. Catalyzes the condensation of (S)-aspartate-beta-semialdehyde [(S)-ASA] and pyruvate to 4-hydroxy-tetrahydrodipicolinate (HTPA). The sequence is that of 4-hydroxy-tetrahydrodipicolinate synthase from Oleidesulfovibrio alaskensis (strain ATCC BAA-1058 / DSM 17464 / G20) (Desulfovibrio alaskensis).